Here is a 442-residue protein sequence, read N- to C-terminus: Phosphoglucosamine mutase (442 aa).

Residue Ser-98 is the Phosphoserine intermediate of the active site. The Mg(2+) site is built by Ser-98, Asp-236, Asp-238, and Asp-240. Residue Ser-98 is modified to Phosphoserine.

This sequence belongs to the phosphohexose mutase family. It depends on Mg(2+) as a cofactor. Post-translationally, activated by phosphorylation.

It carries out the reaction alpha-D-glucosamine 1-phosphate = D-glucosamine 6-phosphate. In terms of biological role, catalyzes the conversion of glucosamine-6-phosphate to glucosamine-1-phosphate. This chain is Phosphoglucosamine mutase, found in Natranaerobius thermophilus (strain ATCC BAA-1301 / DSM 18059 / JW/NM-WN-LF).